Reading from the N-terminus, the 257-residue chain is UPF0246 protein YaaA (257 aa).

It belongs to the UPF0246 family.

This is UPF0246 protein YaaA from Salmonella typhi.